The chain runs to 869 residues: Translation initiation factor IF-2 (869 aa).

Disordered regions lie at residues 51 to 78 and 105 to 277; these read KQHG…NMGK and EEET…SDLK. A compositionally biased stretch (polar residues) spans 67–76; it reads QRKTTSTLNM. Residues 110-119 show a composition bias toward low complexity; sequence RALAEQQAQL. The segment covering 120–241 has biased composition (basic and acidic residues); it reads EAEKAAAEEA…KKQEAEEVHV (122 aa). The tr-type G domain maps to 369–542; that stretch reads SRAPVVTIMG…ELLDLKAPPT (174 aa). The interval 378-385 is G1; it reads GHVDHGKT. A GTP-binding site is contributed by 378-385; it reads GHVDHGKT. The G2 stretch occupies residues 403 to 407; that stretch reads GITQH. Residues 424–427 are G3; that stretch reads DTPG. GTP contacts are provided by residues 424 to 428 and 478 to 481; these read DTPGH and NKMD. The segment at 478-481 is G4; that stretch reads NKMD. The segment at 514–516 is G5; it reads SAK.

It belongs to the TRAFAC class translation factor GTPase superfamily. Classic translation factor GTPase family. IF-2 subfamily.

It localises to the cytoplasm. Its function is as follows. One of the essential components for the initiation of protein synthesis. Protects formylmethionyl-tRNA from spontaneous hydrolysis and promotes its binding to the 30S ribosomal subunits. Also involved in the hydrolysis of GTP during the formation of the 70S ribosomal complex. This Pseudoalteromonas atlantica (strain T6c / ATCC BAA-1087) protein is Translation initiation factor IF-2.